The sequence spans 336 residues: UPF0324 membrane protein BT_1919 (336 aa).

The next 8 helical transmembrane spans lie at 2-19 (LHGVLLIALFSCAAFYIG), 23-45 (FVRSISFSPMIVGIILGMLYANS), 85-107 (IGLPAMLIDVIIVAVTICGGIYL), 117-134 (IALLTSIGSGICGAAAIL), 147-169 (TAVSVSTVVIFGTISMFLYPFLY), 210-232 (AIIVKMIRVMMLVPVLLITTYLV), 253-275 (WFAIGFMGVIAFNSFDLLPAQLV), and 310-332 (FVLALLLYVWLVVGGYFLVKYLT).

Belongs to the UPF0324 family.

The protein localises to the cell membrane. In Bacteroides thetaiotaomicron (strain ATCC 29148 / DSM 2079 / JCM 5827 / CCUG 10774 / NCTC 10582 / VPI-5482 / E50), this protein is UPF0324 membrane protein BT_1919.